Here is a 225-residue protein sequence, read N- to C-terminus: Protein-L-isoaspartate O-methyltransferase (225 aa).

The active site involves Ser-75.

It belongs to the methyltransferase superfamily. L-isoaspartyl/D-aspartyl protein methyltransferase family.

It localises to the cytoplasm. It carries out the reaction [protein]-L-isoaspartate + S-adenosyl-L-methionine = [protein]-L-isoaspartate alpha-methyl ester + S-adenosyl-L-homocysteine. Catalyzes the methyl esterification of L-isoaspartyl residues in peptides and proteins that result from spontaneous decomposition of normal L-aspartyl and L-asparaginyl residues. It plays a role in the repair and/or degradation of damaged proteins. The polypeptide is Protein-L-isoaspartate O-methyltransferase (Xylella fastidiosa (strain M23)).